Reading from the N-terminus, the 338-residue chain is Calcium uniporter protein 4, mitochondrial (338 aa).

The transit peptide at 1–36 directs the protein to the mitochondrion; the sequence is MVMMKKLLSNRLFNMSKTASQSLMNCRTSSSSSLAM. Residues 233 to 253 traverse the membrane as a helical segment; the sequence is LWAGLGYLIIQTAGFMRLTFW. A Selectivity filter motif is present at residues 257–265; that stretch reads WDVMEPICF. Glu261 contributes to the Ca(2+) binding site. A helical membrane pass occupies residues 263 to 280; it reads ICFYVSSVYFMAGYTFFL.

This sequence belongs to the MCU (TC 1.A.77) family.

The protein localises to the mitochondrion inner membrane. It carries out the reaction Ca(2+)(in) = Ca(2+)(out). Mitochondrial inner membrane calcium uniporter that mediates calcium uptake into mitochondria. Constitutes a pore-forming and calcium-conducting subunit. Mitochondrial calcium homeostasis plays key roles in cellular physiology and regulates cell bioenergetics, cytoplasmic calcium signals and activation of cell death pathways. The sequence is that of Calcium uniporter protein 4, mitochondrial from Arabidopsis thaliana (Mouse-ear cress).